We begin with the raw amino-acid sequence, 61 residues long: Small ribosomal subunit protein uS14 (61 aa).

Residues Cys-24, Cys-27, Cys-40, and Cys-43 each coordinate Zn(2+).

It belongs to the universal ribosomal protein uS14 family. Zinc-binding uS14 subfamily. Part of the 30S ribosomal subunit. Contacts proteins S3 and S10. Zn(2+) is required as a cofactor.

Its function is as follows. Binds 16S rRNA, required for the assembly of 30S particles and may also be responsible for determining the conformation of the 16S rRNA at the A site. This Nautilia profundicola (strain ATCC BAA-1463 / DSM 18972 / AmH) protein is Small ribosomal subunit protein uS14.